A 525-amino-acid polypeptide reads, in one-letter code: Endoglucanase 10 (525 aa).

The N-terminal stretch at 1 to 26 (MEEKSKSRGWCGWFIAIIVLASVILA) is a signal peptide. The active-site Nucleophile is Asp-109. A glycan (N-linked (GlcNAc...) asparagine) is linked at Asn-259. His-442 is an active-site residue. N-linked (GlcNAc...) asparagine glycans are attached at residues Asn-464 and Asn-484. Active-site residues include Asp-489 and Glu-498.

The protein belongs to the glycosyl hydrolase 9 (cellulase E) family.

It is found in the secreted. It catalyses the reaction Endohydrolysis of (1-&gt;4)-beta-D-glucosidic linkages in cellulose, lichenin and cereal beta-D-glucans.. The sequence is that of Endoglucanase 10 from Arabidopsis thaliana (Mouse-ear cress).